The primary structure comprises 1164 residues: Phospholipid-transporting ATPase IA (1164 aa).

The Cytoplasmic portion of the chain corresponds to 1-75; sequence MPTMRRTVSE…PRFLYSQFRR (75 aa). Position 25 is a phosphoserine (S25). A Phosphothreonine modification is found at T28. At S29 the chain carries Phosphoserine. A helical membrane pass occupies residues 76–96; it reads AANSFFLFIALLQQIPDVSPT. Residues 97 to 100 lie on the Exoplasmic loop side of the membrane; it reads GRYT. The helical transmembrane segment at 101–121 threads the bilayer; the sequence is TLVPLLFILAVAAIKEIIEDI. The Cytoplasmic segment spans residues 122-297; sequence KRHKADNAVN…SNVERITNVQ (176 aa). Residues 298–318 traverse the membrane as a helical segment; that stretch reads ILILFCILIAMSLVCSVGSAI. Over 319–339 the chain is Exoplasmic loop; that stretch reads WNRRHSGKDWYLHLHYGGASN. The helical transmembrane segment at 340 to 360 threads the bilayer; the sequence is FGLNFLTFIILFNNLIPISLL. Topologically, residues 361–866 are cytoplasmic; that stretch reads VTLEVVKFTQ…KCILYCFYKN (506 aa). D409 (4-aspartylphosphate intermediate) is an active-site residue. 3 residues coordinate ATP: D409, K410, and T411. D409 serves as a coordination point for Mg(2+). Residue T411 coordinates Mg(2+). S443 is modified (phosphoserine). ATP contacts are provided by residues E508, F549, K572, R605, T685, G686, D687, 741–748, R775, and K781; that span reads ALIIDGKT. Residue D801 participates in Mg(2+) binding. ATP contacts are provided by N804 and D805. D805 is a Mg(2+) binding site. The helical transmembrane segment at 867-887 threads the bilayer; sequence IVLYIIEIWFAFVNGFSGQIL. Residues 888 to 890 are Exoplasmic loop-facing; sequence FER. The helical transmembrane segment at 891-911 threads the bilayer; sequence WCIGLYNVMFTAMPPLTLGIF. At 912-939 the chain is on the cytoplasmic side; it reads ERSCRKENMLKYPELYKTSQNALDFNTK. The chain crosses the membrane as a helical span at residues 940–960; it reads VFWVHCLNGLFHSVILFWFPL. At 961-977 the chain is on the exoplasmic loop side; sequence KALQYGTVFGNGKTSDY. A helical membrane pass occupies residues 978–998; it reads LLLGNFVYTFVVITVCLKAGL. Residues 999–1008 lie on the Cytoplasmic side of the membrane; that stretch reads ETSYWTWFSH. Residues 1009–1029 traverse the membrane as a helical segment; sequence IAIWGSIALWVVFFGIYSSLW. Residues 1030–1044 lie on the Exoplasmic loop side of the membrane; the sequence is PAVPMAPDMSGEAAM. A helical membrane pass occupies residues 1045–1065; sequence LFSSGVFWVGLLSIPVASLLL. The Cytoplasmic segment spans residues 1066–1164; the sequence is DVLYKVIKRT…DTTKQRPDEW (99 aa). 1095–1102 lines the ATP pocket; sequence GAVVLGKS. S1126 bears the Phosphoserine mark.

The protein belongs to the cation transport ATPase (P-type) (TC 3.A.3) family. Type IV subfamily. As to quaternary structure, component of a P4-ATPase flippase complex which consists of a catalytic alpha subunit and an accessory beta subunit. Interacts with TMEM30A to form a flippase complex; this complex forms an intermediate phosphoenzyme. Interacts with TMEM30B; this interaction is reported conflictingly. Mg(2+) is required as a cofactor. In terms of processing, cleaved by calpain in a caspase- and calcium influx-dependent manner only during platelet apoptosis and may lead to inactivation. As to expression, found in most tissues except liver and testis. Most abundant in brain and lung. Also detected in fetal tissues. Isoform 1 is expressed in brain. Isoform 2 and isoform 3 are expressed in reticulocytes. Expressed in mouse hippocampus in both dentate gyrus (DG) and the CA3 regions. Expressed in both neuronal as well as non-neuronal cells within the DG. Highly expressed in platelets.

Its subcellular location is the cytoplasmic vesicle. The protein localises to the secretory vesicle. The protein resides in the chromaffin granule membrane. It localises to the cytoplasmic granule. It is found in the cell membrane. Its subcellular location is the endoplasmic reticulum. The protein localises to the golgi apparatus. The protein resides in the endomembrane system. The enzyme catalyses ATP + H2O + phospholipidSide 1 = ADP + phosphate + phospholipidSide 2.. It carries out the reaction a 1,2-diacyl-sn-glycero-3-phospho-L-serine(out) + ATP + H2O = a 1,2-diacyl-sn-glycero-3-phospho-L-serine(in) + ADP + phosphate + H(+). Its activity is regulated as follows. ATPase activity is stimulated by phosphatidylserine (PS) and minimally by phosphatidylethanolamine (PE). ATPase activity is inhibited by the vanadate and by the presence of calcium. Functionally, catalytic component of a P4-ATPase flippase complex which catalyzes the hydrolysis of ATP coupled to the transport of aminophospholipids from the outer to the inner leaflet of various membranes and ensures the maintenance of asymmetric distribution of phospholipids. Phospholipid translocation also seems to be implicated in vesicle formation and in uptake of lipid signaling molecules. In vitro, its ATPase activity is selectively and stereospecifically stimulated by phosphatidylserine (PS). The flippase complex ATP8A1:TMEM30A seems to play a role in regulation of cell migration probably involving flippase-mediated translocation of phosphatidylethanolamine (PE) at the cell membrane. Acts as aminophospholipid translocase at the cell membrane in neuronal cells; the activity is associated with hippocampus-dependent learning. May play a role in brain connectivity. This is Phospholipid-transporting ATPase IA from Mus musculus (Mouse).